The sequence spans 305 residues: MSNQCKTIAHVLPVNNGQEIHVWETPPKENAPSKNSTILIASGFARRMDHFAGLAEYLSENGFHVFRYDSLHHVGLSSGSIDEFTMTTGKNSLCTVYHWLQTKGTQNIGLIAASLSARVAYEVISDLELSFLITAVGVVNLRDTLEKALGFDYLSLPINELPNDLDFEGHKLGSEVFVRDCFEHHWDTLDSTLDKVANTSVPLIAFTANNDDWVKQEEVYDMLAHIRSGHCKLYSLLGSSHDLGENLVVLRNFYQSVTKAAIAMDGGSLEIDVDFIEPDFEQLTIATVNERRLKAEIESRAPEMA.

Catalysis depends on charge relay system residues Ser-114, Asp-211, and His-241.

This sequence belongs to the LuxD family.

Its pathway is lipid metabolism; fatty acid reduction for biolumincescence. Functionally, acyl transferase is part of the fatty acid reductase system required for aldehyde biosynthesis; it produces fatty acids for the luminescent reaction. In Vibrio campbellii (strain ATCC BAA-1116), this protein is Acyl transferase.